We begin with the raw amino-acid sequence, 943 residues long: MTDYKATLNLPETAFPMKAGLPQREPETLKFWNDIGLYQKLRAIGGDRPKFVLHDGPPYANGSIHIGHAVNKILKDIIVRSKTLAGYDAPYVPGWDCHGLPIEHKVETTHGKNLPADKTRELCREYAAEQIEGQKADFIRLGVLGEWDNPYKTMAFANEANEIRALAEMVRQDFVFKGLKPVNWCFDCGSALAEAEVEYADKTSPTIDVGFPVADADKLAAAFGLAALDKPAQIVIWTTTPWTIPANQALNVHPEIDYALVDAGDRYLVLAEALVEPCLARYQREGKVVATAKGEALELINFRHPFYERLSPVYLADYVALDAGTGIVHSSPAYGEDDFYTCKRYGMSNDDILSPVQSNGVYVDSLPFFGGQFIWKANPNVVAKLEEVGSLLAHETINHSYMHCWRHKTPLIYRATAQWFVGMDKQPGQGASLRERALEAITQTEFIPGWGQARLHGMIAGRPDWCISRQRNWGVPIPFFLHKASGELHPRTVELMEEVAQRVEKEGIEAWFRLDAAELLGDEAAQYDKISDTLDVWFDSGTTHWHVLRGSHRIGHASGPVADLYLEGSDQHRGWFHSSLLTGCAIDNHAPYRQLLTHGFTVDESGRKMSKSLGNTVVPQTVIDTLGADILRLWVASTDYSGEIAVSQQILQRSADAYRRIRNTTRFLLSNLNGFDPAKDLLPPEEMLALDRWAVDRALLLQREIEEAYREYRFWNVYSKVHNFCVQELGGFYLDIIKDRQYTTGANSVARRSCQTALFHIAEALVRWIAPILAFTAEEVWKFLPGERVESVMLATWYDGLGELPADAALNREYWEQVMAVKAAVNKELENQRAAKAVGGNLQAEVTLYAEDALQASLARLGNELRFVLITSTATLAPLASAPADAVDSEVAGLKLKVVKSAHAKCGRCWHHREDVGQHAAHPELCGRCIENIEGSGEVRHYA.

The short motif at 58–68 (PYANGSIHIGH) is the 'HIGH' region element. L-isoleucyl-5'-AMP is bound at residue Glu-567. Residues 608 to 612 (KMSKS) carry the 'KMSKS' region motif. Lys-611 is an ATP binding site. Residues Cys-906, Cys-909, Cys-926, and Cys-929 each contribute to the Zn(2+) site.

It belongs to the class-I aminoacyl-tRNA synthetase family. IleS type 1 subfamily. Monomer. Zn(2+) is required as a cofactor.

Its subcellular location is the cytoplasm. The enzyme catalyses tRNA(Ile) + L-isoleucine + ATP = L-isoleucyl-tRNA(Ile) + AMP + diphosphate. Catalyzes the attachment of isoleucine to tRNA(Ile). As IleRS can inadvertently accommodate and process structurally similar amino acids such as valine, to avoid such errors it has two additional distinct tRNA(Ile)-dependent editing activities. One activity is designated as 'pretransfer' editing and involves the hydrolysis of activated Val-AMP. The other activity is designated 'posttransfer' editing and involves deacylation of mischarged Val-tRNA(Ile). The chain is Isoleucine--tRNA ligase from Pseudomonas paraeruginosa (strain DSM 24068 / PA7) (Pseudomonas aeruginosa (strain PA7)).